A 482-amino-acid chain; its full sequence is Altronate oxidoreductase (482 aa).

18 to 29 (IIQFGEGNFLRA) lines the NAD(+) pocket.

Belongs to the mannitol dehydrogenase family. UxaB subfamily.

It catalyses the reaction D-altronate + NAD(+) = keto-D-tagaturonate + NADH + H(+). It functions in the pathway carbohydrate metabolism; pentose and glucuronate interconversion. This Shigella sonnei (strain Ss046) protein is Altronate oxidoreductase.